Consider the following 110-residue polypeptide: Insulin (110 aa).

A signal peptide spans 1–24 (MASLAALLPLLALLVLCRLDPAQA). Cystine bridges form between C31-C96, C43-C109, and C95-C100. Residues 57–87 (EVEELQVGQAELGGGPGAGGLQPSALELALQ) constitute a propeptide, c peptide.

It belongs to the insulin family. As to quaternary structure, heterodimer of a B chain and an A chain linked by two disulfide bonds.

The protein localises to the secreted. Functionally, insulin decreases blood glucose concentration. It increases cell permeability to monosaccharides, amino acids and fatty acids. It accelerates glycolysis, the pentose phosphate cycle, and glycogen synthesis in liver. This Oryctolagus cuniculus (Rabbit) protein is Insulin (INS).